The primary structure comprises 153 residues: Ubiquitin-conjugating enzyme E2 ubc-18 (153 aa).

The region spanning 2–149 (SATRRLQKEL…AEEHTRKHAE (148 aa)) is the UBC core domain. Catalysis depends on Cys86, which acts as the Glycyl thioester intermediate.

Belongs to the ubiquitin-conjugating enzyme family. In terms of assembly, interacts with E3 ubiquitin-protein ligase wwp-1. Interacts with RBR-type E3 ubiquitin transferase ari-1.1. Expressed in neurons localized in the head and tail of adults.

It catalyses the reaction S-ubiquitinyl-[E1 ubiquitin-activating enzyme]-L-cysteine + [E2 ubiquitin-conjugating enzyme]-L-cysteine = [E1 ubiquitin-activating enzyme]-L-cysteine + S-ubiquitinyl-[E2 ubiquitin-conjugating enzyme]-L-cysteine.. In terms of biological role, ubiquitin-conjugating enzyme E2. Accepts ubiquitin from the E1 complex and catalyzes its covalent attachment to other proteins. Required for diet restriction-mediated lifespan extension, probably acting as part of a complex with ubiquitin-protein ligase wwp-1. Acts redundantly with lin-35/Rb in the regulation of pharyngeal morphogenesis during embryonic development by negatively regulating the expression of proteins such as sup-35. The sequence is that of Ubiquitin-conjugating enzyme E2 ubc-18 from Caenorhabditis elegans.